The following is a 46-amino-acid chain: Esculentin-1HSa (46 aa).

Cysteine 40 and cysteine 46 are joined by a disulfide.

Expressed by the skin glands.

Its subcellular location is the secreted. Its function is as follows. Has antibacterial activity against the Gram-positive bacterium S.aureus ATCC 25923 (MIC=12 uM) and the Gram-negative bacterium E.coli ATCC 25726 (MIC=12 uM). This chain is Esculentin-1HSa, found in Odorrana hosii (Hose's rock frog).